The primary structure comprises 104 residues: Protein MGF 110-2L (104 aa).

The first 19 residues, Met-1–Gly-19, serve as a signal peptide directing secretion.

This sequence belongs to the asfivirus MGF 110 family.

Functionally, plays a role in virus cell tropism, and may be required for efficient virus replication in macrophages. This is Protein MGF 110-2L from African swine fever virus (isolate Tick/South Africa/Pretoriuskop Pr4/1996) (ASFV).